Here is a 141-residue protein sequence, read N- to C-terminus: Hemoglobin subunit alpha (141 aa).

In terms of domain architecture, Globin spans 1 to 141 (VLSAKDKTNI…VSTVLTSKYR (141 aa)). Serine 3 is subject to Phosphoserine. Lysine 7 is subject to N6-succinyllysine. A Phosphothreonine modification is found at threonine 8. N6-acetyllysine; alternate is present on lysine 16. An N6-succinyllysine; alternate modification is found at lysine 16. Tyrosine 24 bears the Phosphotyrosine mark. Residue lysine 40 is modified to N6-succinyllysine. Serine 49 bears the Phosphoserine mark. O2 is bound at residue histidine 58. Histidine 87 serves as a coordination point for heme b. Phosphoserine is present on serine 102. Threonine 108 is subject to Phosphothreonine. Serine 124 and serine 131 each carry phosphoserine. 2 positions are modified to phosphothreonine: threonine 134 and threonine 137. Serine 138 carries the post-translational modification Phosphoserine.

This sequence belongs to the globin family. As to quaternary structure, heterotetramer of two alpha chains and two beta chains. Red blood cells.

In terms of biological role, involved in oxygen transport from the lung to the various peripheral tissues. Its function is as follows. Hemopressin acts as an antagonist peptide of the cannabinoid receptor CNR1. Hemopressin-binding efficiently blocks cannabinoid receptor CNR1 and subsequent signaling. The chain is Hemoglobin subunit alpha (HBA) from Mesocricetus auratus (Golden hamster).